We begin with the raw amino-acid sequence, 259 residues long: Thiazole synthase (259 aa).

The active-site Schiff-base intermediate with DXP is the Lys-100. Residues Gly-161, 187–188 (AG), and 209–210 (NT) each bind 1-deoxy-D-xylulose 5-phosphate.

This sequence belongs to the ThiG family. As to quaternary structure, homotetramer. Forms heterodimers with either ThiH or ThiS.

It localises to the cytoplasm. It carries out the reaction [ThiS sulfur-carrier protein]-C-terminal-Gly-aminoethanethioate + 2-iminoacetate + 1-deoxy-D-xylulose 5-phosphate = [ThiS sulfur-carrier protein]-C-terminal Gly-Gly + 2-[(2R,5Z)-2-carboxy-4-methylthiazol-5(2H)-ylidene]ethyl phosphate + 2 H2O + H(+). Its pathway is cofactor biosynthesis; thiamine diphosphate biosynthesis. Its function is as follows. Catalyzes the rearrangement of 1-deoxy-D-xylulose 5-phosphate (DXP) to produce the thiazole phosphate moiety of thiamine. Sulfur is provided by the thiocarboxylate moiety of the carrier protein ThiS. In vitro, sulfur can be provided by H(2)S. The sequence is that of Thiazole synthase from Halalkalibacterium halodurans (strain ATCC BAA-125 / DSM 18197 / FERM 7344 / JCM 9153 / C-125) (Bacillus halodurans).